The chain runs to 188 residues: dCTP deaminase (188 aa).

Residues 111–116, 135–137, Q156, Y170, and Q180 each bind dCTP; these read KSTYAR and TLE. E137 acts as the Proton donor/acceptor in catalysis.

The protein belongs to the dCTP deaminase family. In terms of assembly, homotrimer.

It catalyses the reaction dCTP + H2O + H(+) = dUTP + NH4(+). It functions in the pathway pyrimidine metabolism; dUMP biosynthesis; dUMP from dCTP (dUTP route): step 1/2. Catalyzes the deamination of dCTP to dUTP. This chain is dCTP deaminase, found in Methylococcus capsulatus (strain ATCC 33009 / NCIMB 11132 / Bath).